The sequence spans 156 residues: D-aminoacyl-tRNA deacylase (156 aa).

The short motif at 142–143 (GP) is the Gly-cisPro motif, important for rejection of L-amino acids element.

It belongs to the DTD family. Homodimer.

The protein localises to the cytoplasm. The enzyme catalyses glycyl-tRNA(Ala) + H2O = tRNA(Ala) + glycine + H(+). The catalysed reaction is a D-aminoacyl-tRNA + H2O = a tRNA + a D-alpha-amino acid + H(+). Its function is as follows. An aminoacyl-tRNA editing enzyme that deacylates mischarged D-aminoacyl-tRNAs. Also deacylates mischarged glycyl-tRNA(Ala), protecting cells against glycine mischarging by AlaRS. Acts via tRNA-based rather than protein-based catalysis; rejects L-amino acids rather than detecting D-amino acids in the active site. By recycling D-aminoacyl-tRNA to D-amino acids and free tRNA molecules, this enzyme counteracts the toxicity associated with the formation of D-aminoacyl-tRNA entities in vivo and helps enforce protein L-homochirality. In Cupriavidus pinatubonensis (strain JMP 134 / LMG 1197) (Cupriavidus necator (strain JMP 134)), this protein is D-aminoacyl-tRNA deacylase.